We begin with the raw amino-acid sequence, 230 residues long: D-glycero-alpha-D-manno-heptose 1-phosphate guanylyltransferase (230 aa).

The protein belongs to the D-alpha-D-heptose-1-P guanylyltransferase family.

The enzyme catalyses D-glycero-alpha-D-manno-heptose 1-phosphate + GTP + H(+) = GDP-D-glycero-alpha-D-manno-heptose + diphosphate. Its pathway is nucleotide-sugar biosynthesis; GDP-D-glycero-alpha-D-manno-heptose biosynthesis; GDP-D-glycero-alpha-D-manno-heptose from D-glycero-alpha-D-manno-heptose 7-phosphate: step 3/3. It functions in the pathway cell surface structure biogenesis; S-layer biogenesis. Functionally, catalyzes the GDP transfer from GTP to D-glycero-alpha-D-manno-heptose 1-phosphate, yielding GDP-D-alpha-D-heptose. Cannot use ATP, CTP, dTTP or UTP as substrate. In Aneurinibacillus thermoaerophilus, this protein is D-glycero-alpha-D-manno-heptose 1-phosphate guanylyltransferase (hddC).